A 431-amino-acid polypeptide reads, in one-letter code: Glucose-1-phosphate adenylyltransferase (431 aa).

Residues Tyr109, Gly175, 190 to 191 (EK), and Ser208 contribute to the alpha-D-glucose 1-phosphate site.

It belongs to the bacterial/plant glucose-1-phosphate adenylyltransferase family. In terms of assembly, homotetramer.

It carries out the reaction alpha-D-glucose 1-phosphate + ATP + H(+) = ADP-alpha-D-glucose + diphosphate. It participates in glycan biosynthesis; glycogen biosynthesis. Functionally, involved in the biosynthesis of ADP-glucose, a building block required for the elongation reactions to produce glycogen. Catalyzes the reaction between ATP and alpha-D-glucose 1-phosphate (G1P) to produce pyrophosphate and ADP-Glc. This Alteromonas mediterranea (strain DSM 17117 / CIP 110805 / LMG 28347 / Deep ecotype) protein is Glucose-1-phosphate adenylyltransferase.